The following is a 442-amino-acid chain: G-protein coupled receptor family C group 5 member C (442 aa).

Positions methionine 1–alanine 23 are cleaved as a signal peptide. Residues glutamine 24 to glycine 50 lie on the Extracellular side of the membrane. Residues isoleucine 51–leucine 71 form a helical membrane-spanning segment. At valine 72–serine 85 the chain is on the cytoplasmic side. The chain crosses the membrane as a helical span at residues leucine 86–alanine 106. The Extracellular segment spans residues cysteine 107 to arginine 120. A helical membrane pass occupies residues phenylalanine 121–leucine 141. Residues histidine 142–valine 155 lie on the Cytoplasmic side of the membrane. The helical transmembrane segment at isoleucine 156–isoleucine 176 threads the bilayer. The Extracellular segment spans residues isoleucine 177–aspartate 209. Asparagine 192 is a glycosylation site (N-linked (GlcNAc...) asparagine). A helical membrane pass occupies residues phenylalanine 210–serine 230. The Cytoplasmic segment spans residues alanine 231–histidine 242. Residues glycine 243 to methionine 263 form a helical membrane-spanning segment. The Extracellular portion of the chain corresponds to tyrosine 264–threonine 280. The chain crosses the membrane as a helical span at residues leucine 281 to valine 301. Residues serine 302–aspartate 442 lie on the Cytoplasmic side of the membrane. Phosphoserine is present on residues serine 345, serine 384, serine 404, and serine 407. Tyrosine 415 is subject to Phosphotyrosine. The residue at position 424 (threonine 424) is a Phosphothreonine.

It belongs to the G-protein coupled receptor 3 family.

Its subcellular location is the cell membrane. Functionally, this retinoic acid-inducible G-protein coupled receptor provide evidence for a possible interaction between retinoid and G-protein signaling pathways. The polypeptide is G-protein coupled receptor family C group 5 member C (GPRC5C) (Bos taurus (Bovine)).